We begin with the raw amino-acid sequence, 803 residues long: Exocyst complex component 6 (803 aa).

The protein belongs to the SEC15 family. The exocyst complex is composed of EXOC1, EXOC2, EXOC3, EXOC4, EXOC5, EXOC6, EXOC7 and EXOC8. Interacts with CNTRL. Interacts with RAB11A in a GTP-dependent manner.

The protein resides in the cytoplasm. Its subcellular location is the perinuclear region. It is found in the cell projection. The protein localises to the growth cone. It localises to the midbody. The protein resides in the midbody ring. Its function is as follows. Component of the exocyst complex involved in the docking of exocytic vesicles with fusion sites on the plasma membrane. Together with RAB11A, RAB3IP, RAB8A, PARD3, PRKCI, ANXA2, CDC42 and DNMBP promotes transcytosis of PODXL to the apical membrane initiation sites (AMIS), apical surface formation and lumenogenesis. The polypeptide is Exocyst complex component 6 (EXOC6) (Canis lupus familiaris (Dog)).